The primary structure comprises 59 residues: Large ribosomal subunit protein bL32 (59 aa).

Over residues 1–16 (MAVPKRKTSPSKRGMR) the composition is skewed to basic residues. Positions 1–20 (MAVPKRKTSPSKRGMRRSHD) are disordered.

The protein belongs to the bacterial ribosomal protein bL32 family.

This chain is Large ribosomal subunit protein bL32, found in Sphingopyxis alaskensis (strain DSM 13593 / LMG 18877 / RB2256) (Sphingomonas alaskensis).